We begin with the raw amino-acid sequence, 217 residues long: 3,4-dihydroxy-2-butanone 4-phosphate synthase (217 aa).

D-ribulose 5-phosphate is bound by residues 37 to 38 (RE), D42, 150 to 154 (RGGHT), and E174. E38 contributes to the Mg(2+) binding site. H153 contacts Mg(2+).

It belongs to the DHBP synthase family. In terms of assembly, homodimer. Mg(2+) serves as cofactor. Mn(2+) is required as a cofactor.

It carries out the reaction D-ribulose 5-phosphate = (2S)-2-hydroxy-3-oxobutyl phosphate + formate + H(+). It participates in cofactor biosynthesis; riboflavin biosynthesis; 2-hydroxy-3-oxobutyl phosphate from D-ribulose 5-phosphate: step 1/1. In terms of biological role, catalyzes the conversion of D-ribulose 5-phosphate to formate and 3,4-dihydroxy-2-butanone 4-phosphate. This Escherichia fergusonii (strain ATCC 35469 / DSM 13698 / CCUG 18766 / IAM 14443 / JCM 21226 / LMG 7866 / NBRC 102419 / NCTC 12128 / CDC 0568-73) protein is 3,4-dihydroxy-2-butanone 4-phosphate synthase.